The primary structure comprises 1224 residues: Tyrosine-protein kinase abl-1 (1224 aa).

The SH3 domain maps to 115 to 188; the sequence is SSAPLFVALY…PSNFIAPYNS (74 aa). An SH2 domain is found at 194–284; the sequence is WYHGKISRSD…GLICLLMYPA (91 aa). The 252-residue stretch at 311–562 folds into the Protein kinase domain; it reads IIMHNKLGGG…PRFRDIHFNL (252 aa). ATP is bound by residues 317 to 325, K340, and 385 to 391; these read LGGGQYGDV and EFMCNGN. D432 acts as the Proton acceptor in catalysis. Positions 450–474 match the Kinase activation loop motif; that stretch reads DFGLARFMKEDTYTAHAGAKFPIKW. Positions 579–620 are enriched in basic and acidic residues; it reads LKKNNDKKLESDKRRSNVRERSDSKSRHSSHHDRDRDRESLH. Disordered regions lie at residues 579 to 671, 736 to 775, 796 to 881, 914 to 937, and 968 to 1016; these read LKKN…NTKP, KEST…STYV, KRSE…DVGM, LRHV…ATDN, and RPFS…RSNG. 2 stretches are compositionally biased toward polar residues: residues 639 to 655 and 746 to 760; these read SVSF…TSFR and AGSS…NDSL. Basic and acidic residues-rich tracts occupy residues 797 to 819 and 864 to 877; these read RSET…KSEK and PDSK…ETTK. Polar residues predominate over residues 973-984; it reads QCPNNSTSSAIS. Basic and acidic residues predominate over residues 1001-1016; that stretch reads YEERMKPELPRKRSNG.

The protein belongs to the protein kinase superfamily. Tyr protein kinase family. ABL subfamily. Interacts (via SH2 and SH3 domains) with mig-13; the interaction is direct. May interact with soem-1.

Its subcellular location is the cell membrane. It localises to the cytoplasm. It catalyses the reaction L-tyrosyl-[protein] + ATP = O-phospho-L-tyrosyl-[protein] + ADP + H(+). Functionally, functions downstream of migratory protein mig-13 and is involved in Q neuroblast migration during larval development. Recruited by mig-13 to the leading edge of Q neuroblasts and their descendents to signal downstream, likely to the wve-1 pathway, and direct migration along the anteroposterior body axis. Promotes germline cell apoptosis in response to oxidative, osmotic and heat shock stresses. In Caenorhabditis elegans, this protein is Tyrosine-protein kinase abl-1 (abl-1).